Reading from the N-terminus, the 206-residue chain is Protein Nef (206 aa).

Gly2 is lipidated: N-myristoyl glycine; by host. A Phosphoserine; by host modification is found at Ser6. The interval 62–66 (EDGEE) is acidic; interacts with host PACS1 and PACS2; stabilizes the interaction of NEF/MHC-I with host AP1M1; necessary for MHC-I internalization. The SH3-binding; interaction with Src family tyrosine kinases stretch occupies residues 70–79 (PVRPQVPLRP). The PxxP; stabilizes the interaction of NEF/MHC-I with host AP1M1; necessary for MHC-I internalization signature appears at 73–76 (PQVP). The mediates dimerization, Nef-PTE1 interaction stretch occupies residues 109–125 (DILDLWVYNTQGYFPDW). The binding to ATP6V1H stretch occupies residues 149–181 (VNPQEVEQANEGENNSLLHPMSLHGMEDDGREV). The Dileucine internalization motif; necessary for CD4 internalization motif lies at 165–166 (LL). Residues 175 to 176 (ED) carry the Diacidic; necessary for CD4 internalization motif.

The protein belongs to the lentivirus primate group Nef protein family. As to quaternary structure, monomer; cytosolic form. Homodimer; membrane bound form. Interacts with Nef associated p21-activated kinase (PAK2); this interaction activates PAK2. Associates with the Nef-MHC-I-AP1 complex; this complex is required for MHC-I internalization. Interacts (via C-terminus) with host PI3-kinase. Interacts with host PACS1; this interaction seems to be weak. Interacts with host PACS2. Interacts with host LCK and MAPK3; these interactions inhibit the kinase activity of the latter. Interacts with host ATP6V1H; this interaction may play a role in CD4 endocytosis. Associates with the CD4-Nef-AP2 complex; this complex is required for CD4 internalization. Interacts with host AP2 subunit alpha and AP2 subunit sigma2. Interacts with TCR-zeta chain; this interaction up-regulates the Fas ligand (FasL) surface expression. Interacts with host HCK, LYN, and SRC; these interactions activate the Src family kinases. Interacts with MAP3K5; this interaction inhibits the Fas and TNFR-mediated death signals. Interacts with beta-COP and PTE1. Interacts with human RACK1; this increases Nef phosphorylation by PKC. Interacts with TP53; this interaction decreases the half-life of TP53, protecting the infected cell against p53-mediated apoptosis. The virion-associated Nef proteins are cleaved by the viral protease to release the soluble C-terminal core protein. Nef is probably cleaved concomitantly with viral structural proteins on maturation of virus particles. Post-translationally, myristoylated. In terms of processing, phosphorylated on serine residues, probably by host PKCdelta and theta.

Its subcellular location is the host cell membrane. It localises to the virion. It is found in the secreted. The protein localises to the host Golgi apparatus membrane. In terms of biological role, factor of infectivity and pathogenicity, required for optimal virus replication. Alters numerous pathways of T-lymphocyte function and down-regulates immunity surface molecules in order to evade host defense and increase viral infectivity. Alters the functionality of other immunity cells, like dendritic cells, monocytes/macrophages and NK cells. In infected CD4(+) T-lymphocytes, down-regulates the surface MHC-I, mature MHC-II, CD4, CD28, CCR5 and CXCR4 molecules. Mediates internalization and degradation of host CD4 through the interaction of with the cytoplasmic tail of CD4, the recruitment of AP-2 (clathrin adapter protein complex 2), internalization through clathrin coated pits, and subsequent transport to endosomes and lysosomes for degradation. Diverts host MHC-I molecules to the trans-Golgi network-associated endosomal compartments by an endocytic pathway to finally target them for degradation. MHC-I down-regulation may involve AP-1 (clathrin adapter protein complex 1) or possibly Src family kinase-ZAP70/Syk-PI3K cascade recruited by PACS2. In consequence infected cells are masked for immune recognition by cytotoxic T-lymphocytes. Decreasing the number of immune receptors also prevents reinfection by more HIV particles (superinfection). Down-regulates host SERINC3 and SERINC5 thereby excluding these proteins from the viral particles. Virion infectivity is drastically higher when SERINC3 or SERINC5 are excluded from the viral envelope, because these host antiviral proteins impair the membrane fusion event necessary for subsequent virion penetration. Its function is as follows. Bypasses host T-cell signaling by inducing a transcriptional program nearly identical to that of anti-CD3 cell activation. Interaction with TCR-zeta chain up-regulates the Fas ligand (FasL). Increasing surface FasL molecules and decreasing surface MHC-I molecules on infected CD4(+) cells send attacking cytotoxic CD8+ T-lymphocytes into apoptosis. Functionally, plays a role in optimizing the host cell environment for viral replication without causing cell death by apoptosis. Protects the infected cells from apoptosis in order to keep them alive until the next virus generation is ready to strike. Inhibits the Fas and TNFR-mediated death signals by blocking MAP3K5/ASK1. Decreases the half-life of TP53, protecting the infected cell against p53-mediated apoptosis. Inhibits the apoptotic signals regulated by the Bcl-2 family proteins through the formation of a Nef/PI3-kinase/PAK2 complex that leads to activation of PAK2 and induces phosphorylation of host BAD. In terms of biological role, extracellular Nef protein targets CD4(+) T-lymphocytes for apoptosis by interacting with CXCR4 surface receptors. In Homo sapiens (Human), this protein is Protein Nef.